A 225-amino-acid chain; its full sequence is Small ribosomal subunit protein uS3 (225 aa).

The 69-residue stretch at 38–106 (LRAHLRRKLS…DVALNIVEIR (69 aa)) folds into the KH type-2 domain.

The protein belongs to the universal ribosomal protein uS3 family. Part of the 30S ribosomal subunit. Forms a tight complex with proteins S10 and S14.

In terms of biological role, binds the lower part of the 30S subunit head. Binds mRNA in the 70S ribosome, positioning it for translation. This chain is Small ribosomal subunit protein uS3, found in Gluconacetobacter diazotrophicus (strain ATCC 49037 / DSM 5601 / CCUG 37298 / CIP 103539 / LMG 7603 / PAl5).